A 464-amino-acid chain; its full sequence is MRAVILAAGLGTRFKSEKPKVLHEILGKPMLWYVITNVRNGRIDDIAVVVGHKAQEVMEAFKNENLKFFIQENPKGGTADAVLAAKDFFSSYEGYVLIINGDSPLVSGETIRNMQQFIHMVRTYEGIKLGGVVLTTHLPDPTGYGRIIKEEGTDRIIRIVEEKDATPEEKAITEINAGTYIFYAPYLLEALYRIKPSPVTGELYLTDVIEYMVNKGYEVRSFMAKEPTEALGVNTRWDLALVENVIKLKIARYWAERGVTVHYPETVWIEPDVSIEPDVEIFPDVMLKGKTKIKKGSVIGKGSVIKDSLVEENVIVREYSVIENSEIKKRAVVGPFARIRNESVIGEEAEIGNFVEVKKSSIGKGVKAKHLAYIGDATVGENTNIGAGTVFANYDGKRKYESYVGKSAFIGSNSLLIAPIRVGDWAYIAGGSVVNKDIPEGALAVSRPELKIFEGRGKKKLQKD.

Residues 1–236 form a pyrophosphorylase region; it reads MRAVILAAGL…PTEALGVNTR (236 aa). Residues 6 to 9, Lys20, and 77 to 78 contribute to the UDP-N-acetyl-alpha-D-glucosamine site; these read LAAG and GT. Asp102 is a Mg(2+) binding site. 4 residues coordinate UDP-N-acetyl-alpha-D-glucosamine: Gly145, Glu161, Asn176, and Asn234. Asn234 is a Mg(2+) binding site. The interval 237–257 is linker; it reads WDLALVENVIKLKIARYWAER. The segment at 258–464 is N-acetyltransferase; sequence GVTVHYPETV…GRGKKKLQKD (207 aa). 2 residues coordinate UDP-N-acetyl-alpha-D-glucosamine: Arg340 and Lys358. The active-site Proton acceptor is His370. Residues Tyr373 and Asn384 each coordinate UDP-N-acetyl-alpha-D-glucosamine. Residues Ala387, 393–394, Ser412, Gly430, and Arg447 each bind acetyl-CoA; that span reads NY.

The protein in the N-terminal section; belongs to the N-acetylglucosamine-1-phosphate uridyltransferase family. In the C-terminal section; belongs to the transferase hexapeptide repeat family. As to quaternary structure, homotrimer. It depends on Mg(2+) as a cofactor.

Its subcellular location is the cytoplasm. The catalysed reaction is alpha-D-glucosamine 1-phosphate + acetyl-CoA = N-acetyl-alpha-D-glucosamine 1-phosphate + CoA + H(+). It catalyses the reaction N-acetyl-alpha-D-glucosamine 1-phosphate + UTP + H(+) = UDP-N-acetyl-alpha-D-glucosamine + diphosphate. It participates in nucleotide-sugar biosynthesis; UDP-N-acetyl-alpha-D-glucosamine biosynthesis; N-acetyl-alpha-D-glucosamine 1-phosphate from alpha-D-glucosamine 6-phosphate (route II): step 2/2. Its pathway is nucleotide-sugar biosynthesis; UDP-N-acetyl-alpha-D-glucosamine biosynthesis; UDP-N-acetyl-alpha-D-glucosamine from N-acetyl-alpha-D-glucosamine 1-phosphate: step 1/1. It functions in the pathway bacterial outer membrane biogenesis; LPS lipid A biosynthesis. Functionally, catalyzes the last two sequential reactions in the de novo biosynthetic pathway for UDP-N-acetylglucosamine (UDP-GlcNAc). The C-terminal domain catalyzes the transfer of acetyl group from acetyl coenzyme A to glucosamine-1-phosphate (GlcN-1-P) to produce N-acetylglucosamine-1-phosphate (GlcNAc-1-P), which is converted into UDP-GlcNAc by the transfer of uridine 5-monophosphate (from uridine 5-triphosphate), a reaction catalyzed by the N-terminal domain. This chain is Bifunctional protein GlmU, found in Aquifex aeolicus (strain VF5).